The sequence spans 89 residues: Toxin To14 (89 aa).

The N-terminal stretch at 1 to 19 (MNCLMLIFVVFLLAFGVEC) is a signal peptide. Residues 21–85 (KDDYPVDTAK…SPTKTSGRCN (65 aa)) enclose the LCN-type CS-alpha/beta domain. Intrachain disulfides connect Cys33-Cys84, Cys37-Cys60, Cys46-Cys67, and Cys50-Cys69.

As to expression, expressed by the venom gland.

It is found in the secreted. Its function is as follows. Inhibits voltage-gated sodium channels (Nav). This chain is Toxin To14, found in Tityus obscurus (Amazonian scorpion).